We begin with the raw amino-acid sequence, 91 residues long: UPF0335 protein BBta_6866 (91 aa).

It belongs to the UPF0335 family.

This Bradyrhizobium sp. (strain BTAi1 / ATCC BAA-1182) protein is UPF0335 protein BBta_6866.